The following is a 281-amino-acid chain: 2-dehydro-3-deoxyphosphooctonate aldolase (281 aa).

It belongs to the KdsA family.

The protein localises to the cytoplasm. The enzyme catalyses D-arabinose 5-phosphate + phosphoenolpyruvate + H2O = 3-deoxy-alpha-D-manno-2-octulosonate-8-phosphate + phosphate. It functions in the pathway carbohydrate biosynthesis; 3-deoxy-D-manno-octulosonate biosynthesis; 3-deoxy-D-manno-octulosonate from D-ribulose 5-phosphate: step 2/3. It participates in bacterial outer membrane biogenesis; lipopolysaccharide biosynthesis. The polypeptide is 2-dehydro-3-deoxyphosphooctonate aldolase (Hahella chejuensis (strain KCTC 2396)).